A 502-amino-acid chain; its full sequence is Glycerol kinase (502 aa).

T16 is an ADP binding site. ATP is bound by residues T16, T17, and S18. T16 provides a ligand contact to sn-glycerol 3-phosphate. R20 is an ADP binding site. Positions 86, 87, 138, and 247 each coordinate sn-glycerol 3-phosphate. Glycerol-binding residues include R86, E87, Y138, D247, and Q248. Residues T269 and G312 each contribute to the ADP site. ATP contacts are provided by T269, G312, Q316, and G413. Positions 413 and 417 each coordinate ADP.

This sequence belongs to the FGGY kinase family.

It catalyses the reaction glycerol + ATP = sn-glycerol 3-phosphate + ADP + H(+). It functions in the pathway polyol metabolism; glycerol degradation via glycerol kinase pathway; sn-glycerol 3-phosphate from glycerol: step 1/1. Inhibited by fructose 1,6-bisphosphate (FBP). Its function is as follows. Key enzyme in the regulation of glycerol uptake and metabolism. Catalyzes the phosphorylation of glycerol to yield sn-glycerol 3-phosphate. The protein is Glycerol kinase of Dechloromonas aromatica (strain RCB).